Here is a 96-residue protein sequence, read N- to C-terminus: Putative pterin-4-alpha-carbinolamine dehydratase (96 aa).

It belongs to the pterin-4-alpha-carbinolamine dehydratase family.

The catalysed reaction is (4aS,6R)-4a-hydroxy-L-erythro-5,6,7,8-tetrahydrobiopterin = (6R)-L-erythro-6,7-dihydrobiopterin + H2O. This Prochlorococcus marinus (strain MIT 9301) protein is Putative pterin-4-alpha-carbinolamine dehydratase.